Here is a 160-residue protein sequence, read N- to C-terminus: Small ribosomal subunit protein uS7B (160 aa).

It belongs to the universal ribosomal protein uS7 family. Part of the 30S ribosomal subunit. Contacts proteins S9 and S11.

In terms of biological role, one of the primary rRNA binding proteins, it binds directly to 16S rRNA where it nucleates assembly of the head domain of the 30S subunit. Is located at the subunit interface close to the decoding center, probably blocks exit of the E-site tRNA. This Aquifex aeolicus (strain VF5) protein is Small ribosomal subunit protein uS7B.